The chain runs to 408 residues: Glutamate N-acetyltransferase (408 aa).

T150, K176, T189, E271, N403, and T408 together coordinate substrate. Residue T189 is the Nucleophile of the active site.

It belongs to the ArgJ family. In terms of assembly, heterotetramer of two alpha and two beta chains.

The protein localises to the cytoplasm. The catalysed reaction is N(2)-acetyl-L-ornithine + L-glutamate = N-acetyl-L-glutamate + L-ornithine. Its pathway is amino-acid biosynthesis; L-arginine biosynthesis; L-ornithine and N-acetyl-L-glutamate from L-glutamate and N(2)-acetyl-L-ornithine (cyclic): step 1/1. Catalyzes the transfer of the acetyl group from N(2)-acetylornithine to glutamate, forming N-acetylglutamate and L-ornithine. This is Glutamate N-acetyltransferase from Methanococcus maripaludis (strain C5 / ATCC BAA-1333).